We begin with the raw amino-acid sequence, 186 residues long: Peptidyl-tRNA hydrolase (186 aa).

Residue Y14 participates in tRNA binding. Catalysis depends on H19, which acts as the Proton acceptor. The tRNA site is built by Y64, N66, and N112.

It belongs to the PTH family. As to quaternary structure, monomer.

It is found in the cytoplasm. It catalyses the reaction an N-acyl-L-alpha-aminoacyl-tRNA + H2O = an N-acyl-L-amino acid + a tRNA + H(+). Its function is as follows. Hydrolyzes ribosome-free peptidyl-tRNAs (with 1 or more amino acids incorporated), which drop off the ribosome during protein synthesis, or as a result of ribosome stalling. Catalyzes the release of premature peptidyl moieties from peptidyl-tRNA molecules trapped in stalled 50S ribosomal subunits, and thus maintains levels of free tRNAs and 50S ribosomes. The chain is Peptidyl-tRNA hydrolase from Bacillus anthracis.